The following is a 239-amino-acid chain: Probable transcriptional regulatory protein BT9727_0453 (239 aa).

This sequence belongs to the TACO1 family. YeeN subfamily.

The protein resides in the cytoplasm. The polypeptide is Probable transcriptional regulatory protein BT9727_0453 (Bacillus thuringiensis subsp. konkukian (strain 97-27)).